The primary structure comprises 395 residues: [LysW]-aminoadipate semialdehyde transaminase (395 aa).

Residues 113–114 and Phe140 each bind pyridoxal 5'-phosphate; that span reads GT. A substrate-binding site is contributed by Arg143. Residue 225 to 228 coordinates pyridoxal 5'-phosphate; that stretch reads DEIQ. Lys254 is modified (N6-(pyridoxal phosphate)lysine). A substrate-binding site is contributed by Thr282. Thr283 contacts pyridoxal 5'-phosphate.

It belongs to the class-III pyridoxal-phosphate-dependent aminotransferase family. LysJ subfamily. Homodimer. Pyridoxal 5'-phosphate is required as a cofactor.

It localises to the cytoplasm. It catalyses the reaction [amino-group carrier protein]-C-terminal-gamma-(L-lysyl)-L-glutamate + 2-oxoglutarate = [amino-group carrier protein]-C-terminal-N-(1-carboxy-5-oxopentan-1-yl)-L-glutamine + L-glutamate. Its pathway is amino-acid biosynthesis; L-lysine biosynthesis via AAA pathway; L-lysine from L-alpha-aminoadipate (Thermus route): step 4/5. Its function is as follows. Catalyzes the transfer of the amino group of L-glutamate to [LysW]-aminoadipate 6-semialdehyde, generating [LysW]-gamma-L-lysine. This Thermus thermophilus (strain ATCC 27634 / DSM 579 / HB8) protein is [LysW]-aminoadipate semialdehyde transaminase.